The sequence spans 121 residues: Large ribosomal subunit protein bL19 (121 aa).

The protein belongs to the bacterial ribosomal protein bL19 family.

This protein is located at the 30S-50S ribosomal subunit interface and may play a role in the structure and function of the aminoacyl-tRNA binding site. This Legionella pneumophila (strain Paris) protein is Large ribosomal subunit protein bL19.